Here is a 577-residue protein sequence, read N- to C-terminus: ABC transporter G family member 4 (577 aa).

The 243-residue stretch at 6–248 (LSTSSISYAK…LLSKGFTVPS (243 aa)) folds into the ABC transporter domain. 48-55 (GPSGAGKS) contacts ATP. In terms of domain architecture, ABC transmembrane type-2 spans 299–509 (TEISLLSSRF…ALDALLINEY (211 aa)). The next 7 membrane-spanning stretches (helical) occupy residues 318–338 (LLLT…TIYL), 353–373 (LFAF…PIFI), 400–420 (VFLP…YFLV), 429–449 (LAYF…FVLF), 458–478 (IAGT…SGYF), 487–507 (YWLF…LLIN), and 548–568 (FNVY…FLVL).

This sequence belongs to the ABC transporter superfamily. ABCG family. Eye pigment precursor importer (TC 3.A.1.204) subfamily.

Its subcellular location is the membrane. In Arabidopsis thaliana (Mouse-ear cress), this protein is ABC transporter G family member 4 (ABCG4).